The following is a 242-amino-acid chain: uncharacterized protein (242 aa).

This is an uncharacterized protein from Agrobacterium vitis (Rhizobium vitis).